Here is a 23-residue protein sequence, read N- to C-terminus: Prolamin alpha-3 (23 aa).

The polypeptide is Prolamin alpha-3 (Dactylis glomerata (Orchard grass)).